The primary structure comprises 145 residues: Cytochrome b (145 aa).

A helical transmembrane segment spans residues 38–58 (FFALHFLLPFVLAALALMHLI). Heme b-binding residues include histidine 42 and histidine 56. Histidine 61 provides a ligand contact to a ubiquinone. Residues 85 to 105 (FIFKDLVTIFIFFIVLSIFVF) traverse the membrane as a helical segment.

This sequence belongs to the cytochrome b family. Fungal cytochrome b-c1 complex contains 10 subunits; 3 respiratory subunits, 2 core proteins and 5 low-molecular weight proteins. Cytochrome b-c1 complex is a homodimer. It depends on heme b as a cofactor.

It is found in the mitochondrion inner membrane. Functionally, component of the ubiquinol-cytochrome c reductase complex (complex III or cytochrome b-c1 complex) that is part of the mitochondrial respiratory chain. The b-c1 complex mediates electron transfer from ubiquinol to cytochrome c. Contributes to the generation of a proton gradient across the mitochondrial membrane that is then used for ATP synthesis. The polypeptide is Cytochrome b (cob) (Aspergillus flavus).